We begin with the raw amino-acid sequence, 145 residues long: Alpha-amylase/trypsin inhibitor CM1 (145 aa).

A signal peptide spans 1-25 (MASKSSISPLLLATVLVSVFAAATA).

Belongs to the protease inhibitor I6 (cereal trypsin/alpha-amylase inhibitor) family. Subunit of the tetrameric inhibitor. As to expression, endosperm.

The protein localises to the secreted. Its function is as follows. Alpha-amylase/trypsin inhibitor. It could be involved in insect defense mechanisms. The protein is Alpha-amylase/trypsin inhibitor CM1 of Triticum aestivum (Wheat).